The chain runs to 137 residues: MRLRVVAVGRPRLAYARLGVEEYARRMRRYAPLDLVFVRKGEELLPKAEGHRKVVLDERGRLLTTEELYRRLLAWEGERVAFLVGGAEGHPEAVREEADLLLSLSPLTLQHELALLVLMEQLYRVLTLRAGHPYHRP.

S-adenosyl-L-methionine-binding positions include L56, G85, and 104-109; that span reads LSPLTL.

Belongs to the RNA methyltransferase RlmH family. Homodimer.

Its subcellular location is the cytoplasm. The enzyme catalyses pseudouridine(1915) in 23S rRNA + S-adenosyl-L-methionine = N(3)-methylpseudouridine(1915) in 23S rRNA + S-adenosyl-L-homocysteine + H(+). Its function is as follows. Specifically methylates the pseudouridine at position 1915 (m3Psi1915) in 23S rRNA. The chain is Ribosomal RNA large subunit methyltransferase H from Thermus thermophilus (strain ATCC 27634 / DSM 579 / HB8).